A 175-amino-acid polypeptide reads, in one-letter code: Macro domain-containing protein TTE0995 (175 aa).

A Macro domain is found at 1 to 174 (MKEKIKLIKG…VYSKAYEELD (174 aa)).

The protein belongs to the MacroD-type family.

This chain is Macro domain-containing protein TTE0995, found in Caldanaerobacter subterraneus subsp. tengcongensis (strain DSM 15242 / JCM 11007 / NBRC 100824 / MB4) (Thermoanaerobacter tengcongensis).